Here is a 1478-residue protein sequence, read N- to C-terminus: Zinc finger protein 518A (1478 aa).

4 C2H2-type zinc fingers span residues 152–174 (FPCE…RKTH), 209–231 (FQCE…IHRH), 236–258 (YKCG…LRVH), and 264–287 (FTCH…ITLH). Residues 355-394 (TQTKSEDQSQEQLNEEKGGRQHCEDGDKPIESGSEKATVL) are disordered. Residue Lys-358 forms a Glycyl lysine isopeptide (Lys-Gly) (interchain with G-Cter in SUMO2) linkage. Basic and acidic residues predominate over residues 368-388 (NEEKGGRQHCEDGDKPIESGS). Glycyl lysine isopeptide (Lys-Gly) (interchain with G-Cter in SUMO2) cross-links involve residues Lys-390 and Lys-428. A disordered region spans residues 464 to 484 (PSPALQPNTEKESTANLPPQA). Residue Lys-518 forms a Glycyl lysine isopeptide (Lys-Gly) (interchain with G-Cter in SUMO2) linkage. Phosphoserine is present on Ser-652. The tract at residues 656–694 (VCENLQRESSNKTVTQQSTSDSDTTSPLRKESSNSDSLL) is disordered. Residues 670–681 (TQQSTSDSDTTS) are compositionally biased toward low complexity. Residues Lys-707, Lys-792, Lys-882, Lys-895, Lys-987, Lys-1008, Lys-1041, Lys-1055, Lys-1078, Lys-1180, and Lys-1441 each participate in a glycyl lysine isopeptide (Lys-Gly) (interchain with G-Cter in SUMO2) cross-link. A C2H2-type 5 zinc finger spans residues 1444–1466 (FNCWFCGRVFDNQDVWAGHGQRH).

It belongs to the krueppel C2H2-type zinc-finger protein family.

The protein localises to the nucleus. Through its association with the EHMT1-EHMT2/G9A and PRC2/EED-EZH2 histone methyltransferase complexes may function in gene silencing, regulating repressive post-translational methylation of histone tails at promoters of target genes. This Rattus norvegicus (Rat) protein is Zinc finger protein 518A (Znf518a).